The primary structure comprises 146 residues: Large ribosomal subunit protein uL24z (146 aa).

Disordered regions lie at residues 1-26 (MKYN…SSER) and 121-146 (KAKG…QNVD). Basic residues predominate over residues 9-18 (SSRRKNRKAH). A compositionally biased stretch (basic and acidic residues) spans 121-138 (KAKGRAAADKEKGTKFTS).

It belongs to the universal ribosomal protein uL24 family.

The sequence is that of Large ribosomal subunit protein uL24z (RPL26A) from Arabidopsis thaliana (Mouse-ear cress).